Consider the following 862-residue polypeptide: Ubiquitin carboxyl-terminal hydrolase 13 (862 aa).

The UBP-type; degenerate zinc-finger motif lies at Gln-182 to Met-290. Residues Cys-206, Cys-209, Cys-226, and His-239 each contribute to the Zn(2+) site. The region spanning Thr-331 to Ile-860 is the USP domain. Cys-340 serves as the catalytic Nucleophile. 2 consecutive UBA domains span residues Asp-647–His-688 and Gln-722–His-762. His-822 functions as the Proton acceptor in the catalytic mechanism.

This sequence belongs to the peptidase C19 family.

The catalysed reaction is Thiol-dependent hydrolysis of ester, thioester, amide, peptide and isopeptide bonds formed by the C-terminal Gly of ubiquitin (a 76-residue protein attached to proteins as an intracellular targeting signal).. Specifically inhibited by spautin-1 (specific and potent autophagy inhibitor-1), a derivative of MBCQ that binds to USP13 and inhibits deubiquitinase activity. In terms of biological role, deubiquitinase that mediates deubiquitination of target proteins and is involved in various processes such as autophagy and endoplasmic reticulum-associated degradation (ERAD). The chain is Ubiquitin carboxyl-terminal hydrolase 13 (USP13) from Gallus gallus (Chicken).